The sequence spans 177 residues: Protein-export protein SecB (177 aa).

This sequence belongs to the SecB family. Homotetramer, a dimer of dimers. One homotetramer interacts with 1 SecA dimer.

The protein localises to the cytoplasm. Functionally, one of the proteins required for the normal export of preproteins out of the cell cytoplasm. It is a molecular chaperone that binds to a subset of precursor proteins, maintaining them in a translocation-competent state. It also specifically binds to its receptor SecA. This is Protein-export protein SecB from Ehrlichia canis (strain Jake).